Here is a 78-residue protein sequence, read N- to C-terminus: Large ribosomal subunit protein bL28 (78 aa).

A disordered region spans residues 1-25 (MSRVCQVTGKRPTVGNNRSHARNAT).

It belongs to the bacterial ribosomal protein bL28 family.

This chain is Large ribosomal subunit protein bL28, found in Alteromonas mediterranea (strain DSM 17117 / CIP 110805 / LMG 28347 / Deep ecotype).